We begin with the raw amino-acid sequence, 502 residues long: Cytochrome P450 71B16 (502 aa).

The helical transmembrane segment at 1-21 threads the bilayer; it reads MAISLLCLFLITLVSLIFVVK. Cysteine 444 is a heme binding site.

It belongs to the cytochrome P450 family. The cofactor is heme.

It is found in the membrane. This Arabidopsis thaliana (Mouse-ear cress) protein is Cytochrome P450 71B16 (CYP71B16).